The following is a 436-amino-acid chain: GTPase Der (436 aa).

EngA-type G domains lie at 4–167 and 175–351; these read PTVA…PTEV and IRFS…ESQN. GTP is bound by residues 10–17, 57–61, 119–122, 181–188, 229–233, and 294–297; these read GRPNVGKS, DTGGI, NKVD, DTAGM, and NKWD. The KH-like domain occupies 352–436; sequence RRISSAVLND…PIHLIARKRK (85 aa).

It belongs to the TRAFAC class TrmE-Era-EngA-EngB-Septin-like GTPase superfamily. EngA (Der) GTPase family. As to quaternary structure, associates with the 50S ribosomal subunit.

GTPase that plays an essential role in the late steps of ribosome biogenesis. The sequence is that of GTPase Der from Streptococcus thermophilus (strain ATCC BAA-491 / LMD-9).